The primary structure comprises 340 residues: Phenylalanine--tRNA ligase alpha subunit (340 aa).

E258 is a Mg(2+) binding site.

It belongs to the class-II aminoacyl-tRNA synthetase family. Phe-tRNA synthetase alpha subunit type 1 subfamily. In terms of assembly, tetramer of two alpha and two beta subunits. It depends on Mg(2+) as a cofactor.

It is found in the cytoplasm. The catalysed reaction is tRNA(Phe) + L-phenylalanine + ATP = L-phenylalanyl-tRNA(Phe) + AMP + diphosphate + H(+). The protein is Phenylalanine--tRNA ligase alpha subunit of Corynebacterium efficiens (strain DSM 44549 / YS-314 / AJ 12310 / JCM 11189 / NBRC 100395).